Here is a 402-residue protein sequence, read N- to C-terminus: Elongation factor Tu (402 aa).

The tr-type G domain occupies 16-211 (KEHINIGTIG…AVDSYIDSPV (196 aa)). Residues 25–32 (GHVDHGKT) are G1. Position 25–32 (25–32 (GHVDHGKT)) interacts with GTP. Thr-32 provides a ligand contact to Mg(2+). Residues 66–70 (GITIN) form a G2 region. A G3 region spans residues 87–90 (DCPG). GTP-binding positions include 87–91 (DCPGH) and 142–145 (NKID). Residues 142–145 (NKID) are G4. The tract at residues 181–183 (SAR) is G5.

It belongs to the TRAFAC class translation factor GTPase superfamily. Classic translation factor GTPase family. EF-Tu/EF-1A subfamily. As to quaternary structure, monomer.

The protein resides in the cytoplasm. The enzyme catalyses GTP + H2O = GDP + phosphate + H(+). GTP hydrolase that promotes the GTP-dependent binding of aminoacyl-tRNA to the A-site of ribosomes during protein biosynthesis. In Mesomycoplasma hyopneumoniae (strain 232) (Mycoplasma hyopneumoniae), this protein is Elongation factor Tu.